Consider the following 324-residue polypeptide: Probable nicotianamine synthase 4 (324 aa).

It belongs to the nicotianamine synthase (NAS)-like family.

The enzyme catalyses 3 S-adenosyl-L-methionine = nicotianamine + 3 S-methyl-5'-thioadenosine + 3 H(+). Its function is as follows. Synthesizes nicotianamine, a polyamine which serves as a sensor for the physiological iron status within the plant, and/or might be involved in the transport of iron. The protein is Probable nicotianamine synthase 4 (NAS4) of Arabidopsis thaliana (Mouse-ear cress).